A 358-amino-acid polypeptide reads, in one-letter code: Heme A synthase 1 (358 aa).

5 helical membrane passes run 11–31 (LVGT…VGGG), 98–117 (WGRL…RLRG), 123–143 (LTAW…MGWY), 159–179 (LYLG…LWTA), and 199–219 (LLSV…LVAA). Position 262 (His-262) interacts with heme. Transmembrane regions (helical) follow at residues 264 to 284 (VAAT…LRAP), 292 to 312 (LFLL…STLV), and 315 to 335 (MAEL…ACIA). His-322 contacts heme.

The protein belongs to the COX15/CtaA family. Type 2 subfamily. As to quaternary structure, interacts with CtaB. Heme b serves as cofactor.

It is found in the cell membrane. The enzyme catalyses Fe(II)-heme o + 2 A + H2O = Fe(II)-heme a + 2 AH2. Its pathway is porphyrin-containing compound metabolism; heme A biosynthesis; heme A from heme O: step 1/1. Catalyzes the conversion of heme O to heme A by two successive hydroxylations of the methyl group at C8. The first hydroxylation forms heme I, the second hydroxylation results in an unstable dihydroxymethyl group, which spontaneously dehydrates, resulting in the formyl group of heme A. This Acidiphilium cryptum (strain JF-5) protein is Heme A synthase 1.